A 331-amino-acid polypeptide reads, in one-letter code: 6-phosphogluconolactonase (331 aa).

Residue Lys-287 is modified to N6-acetyllysine.

This sequence belongs to the cycloisomerase 2 family.

The catalysed reaction is 6-phospho-D-glucono-1,5-lactone + H2O = 6-phospho-D-gluconate + H(+). Its pathway is carbohydrate degradation; pentose phosphate pathway; D-ribulose 5-phosphate from D-glucose 6-phosphate (oxidative stage): step 2/3. Its function is as follows. Catalyzes the hydrolysis of 6-phosphogluconolactone to 6-phosphogluconate. This Shigella flexneri protein is 6-phosphogluconolactonase.